Here is a 448-residue protein sequence, read N- to C-terminus: Phosphoglucosamine mutase (448 aa).

The active-site Phosphoserine intermediate is the Ser100. Positions 100, 240, 242, and 244 each coordinate Mg(2+). Ser100 is subject to Phosphoserine.

This sequence belongs to the phosphohexose mutase family. Requires Mg(2+) as cofactor. In terms of processing, activated by phosphorylation.

It catalyses the reaction alpha-D-glucosamine 1-phosphate = D-glucosamine 6-phosphate. Its function is as follows. Catalyzes the conversion of glucosamine-6-phosphate to glucosamine-1-phosphate. This Bacillus pumilus (strain SAFR-032) protein is Phosphoglucosamine mutase.